The following is a 696-amino-acid chain: Equisetin cluster transcription factor eqxF (696 aa).

Disordered regions lie at residues 1 to 24 (MADQVQDVHPMEWGPGKTPQGRAR) and 73 to 117 (NQEQ…PADY).

The protein localises to the nucleus. Transcription factor that regulates the expression of the gene cluster that mediates the biosynthesis of Equisetin. The sequence is that of Equisetin cluster transcription factor eqxF from Fusarium heterosporum.